The chain runs to 69 residues: Sec-independent protein translocase protein TatA (69 aa).

The chain crosses the membrane as a helical span at residues 1-21; that stretch reads MGSLSIWHWLIVLAIALLLFG. A disordered region spans residues 41–69; sequence KGMNDDEETPPPAQSTTSRTVEHKADESK. The segment covering 60 to 69 has biased composition (basic and acidic residues); sequence TVEHKADESK.

It belongs to the TatA/E family. In terms of assembly, the Tat system comprises two distinct complexes: a TatABC complex, containing multiple copies of TatA, TatB and TatC subunits, and a separate TatA complex, containing only TatA subunits. Substrates initially bind to the TatABC complex, which probably triggers association of the separate TatA complex to form the active translocon.

It is found in the cell inner membrane. Functionally, part of the twin-arginine translocation (Tat) system that transports large folded proteins containing a characteristic twin-arginine motif in their signal peptide across membranes. TatA could form the protein-conducting channel of the Tat system. This chain is Sec-independent protein translocase protein TatA, found in Rhizobium rhizogenes (strain K84 / ATCC BAA-868) (Agrobacterium radiobacter).